A 121-amino-acid chain; its full sequence is Large ribosomal subunit protein uL18 (121 aa).

The span at 1–19 (MASKKVQKIRDKRKARVRA) shows a compositional bias: basic residues. Residues 1–23 (MASKKVQKIRDKRKARVRAKISG) are disordered.

It belongs to the universal ribosomal protein uL18 family. In terms of assembly, part of the 50S ribosomal subunit; part of the 5S rRNA/L5/L18/L25 subcomplex. Contacts the 5S and 23S rRNAs.

Its function is as follows. This is one of the proteins that bind and probably mediate the attachment of the 5S RNA into the large ribosomal subunit, where it forms part of the central protuberance. The protein is Large ribosomal subunit protein uL18 of Syntrophus aciditrophicus (strain SB).